Consider the following 284-residue polypeptide: uncharacterized protein (284 aa).

This is an uncharacterized protein from Acanthamoeba polyphaga (Amoeba).